The following is a 326-amino-acid chain: Eukaryotic translation initiation factor 2 subunit 1 (326 aa).

Positions 24–95 constitute an S1 motif domain; that stretch reads DDLIMVKVNR…QKGYIDLSKR (72 aa). S59 carries the phosphoserine; by eIK1, eIK2 and PK4 modification. A disordered region spans residues 291–326; that stretch reads LDKHDGLSSDDEYSSDGDEDDSSNDDDNSSDEDDDD. Residues 298-326 are compositionally biased toward acidic residues; it reads SSDDEYSSDGDEDDSSNDDDNSSDEDDDD.

Belongs to the eIF-2-alpha family. Phosphorylates at Ser-59 in mature trophozoites, schizonts and gametocytes but not in rings and young trophozoites. Phosphorylates at Ser-59 by eIK2 in salivary gland sporozoites but not in midgut and hemocoel sporozoites. Dephosphorylated at Ser-59 by UIS2. Phosphorylation of eIF2alpha subunit of the pre-initiation complex eIF2 inhibits recycling of inactive eIF2-GDP to active eIF2-GTP by limiting the activity of the guanine nucleotide exchange factor eIF2B and thus, inhibits protein translation.

Its subcellular location is the cytoplasm. It is found in the stress granule. In terms of biological role, functions in the early steps of protein synthesis by forming a ternary complex with GTP and initiator tRNA. May regulate protein translation in response to amino acid starvation. May regulate protein at various stages of parasite development. The polypeptide is Eukaryotic translation initiation factor 2 subunit 1 (Plasmodium berghei (strain Anka)).